Here is a 46-residue protein sequence, read N- to C-terminus: Light-harvesting protein B-800/850 beta 2 chain (46 aa).

Residues 2–25 (AERSLSGLTEEEAVAVHAQFQTTF) lie on the Cytoplasmic side of the membrane. A bacteriochlorophyll-binding residues include His-18 and His-36. Residues 26-46 (SAFIVLAAVAHVLVWVWKPWF) form a helical membrane-spanning segment.

This sequence belongs to the antenna complex beta subunit family. The core complex is formed by different alpha and beta chains, binding bacteriochlorophyll molecules, and arranged most probably in tetrameric structures disposed around the reaction center.

The protein localises to the cell inner membrane. Antenna complexes are light-harvesting systems, which transfer the excitation energy to the reaction centers. This is Light-harvesting protein B-800/850 beta 2 chain (B2) from Magnetospirillum molischianum (Rhodospirillum molischianum).